The primary structure comprises 228 residues: Non-fluorescent flavoprotein (228 aa).

This sequence belongs to the bacterial luciferase oxidoreductase family. As to quaternary structure, homodimer. Requires FMN as cofactor.

In Photobacterium leiognathi, this protein is Non-fluorescent flavoprotein (luxF).